Here is a 49-residue protein sequence, read N- to C-terminus: MSQKKVALECTKCGARNYTITANPQRQERLELRKFCKHCGEYTIHRESR.

This sequence belongs to the bacterial ribosomal protein bL33 family.

The chain is Large ribosomal subunit protein bL33A from Limosilactobacillus reuteri subsp. reuteri (strain JCM 1112) (Lactobacillus reuteri).